The chain runs to 245 residues: Fibroblast growth factor 3 (245 aa).

The signal sequence occupies residues 1–17 (MGLIWLLLLSLLEPSWP). Asn-65 carries N-linked (GlcNAc...) asparagine glycosylation. Disordered regions lie at residues 137–181 (GSSG…FLPR) and 195–245 (QSSQ…LAVA). Over residues 161–173 (GRPRRGFKTRRTQ) the composition is skewed to basic residues. The span at 226-238 (TLSTRATPSTQLH) shows a compositional bias: polar residues.

Belongs to the heparin-binding growth factors family. In terms of assembly, interacts with FGFR1 and FGFR2. Affinity between fibroblast growth factors (FGFs) and their receptors is increased by heparan sulfate glycosaminoglycans that function as coreceptors. Glycosylated.

The protein localises to the nucleus. It is found in the endoplasmic reticulum. The protein resides in the golgi apparatus. Functionally, plays an important role in the regulation of embryonic development, cell proliferation, and cell differentiation. Required for normal ear development. The protein is Fibroblast growth factor 3 (Fgf3) of Mus musculus (Mouse).